A 285-amino-acid chain; its full sequence is MGHRQSVDYTSIPPSELDAHERLPRRKSRFDLFYGWKGIAFLSTLTNVLFISGFFYFGTHLFSPSSSFGHEECHLGSERLWERPVPWKKVVLENHQEFVDGDPWDSKFAGDGTSSNGGAPSPWDSVWLPNWVALENDPAAQGYGFGTPLTGPGSEGNEHDPTPWTPGSQAFGLAVMHQLHCVASIKKAINDYRYTGGHRGSNSSANIGHVDHCVEVLRQATMCHGDMSLIRPNVKGHSYTGYDGWGNEHLCRDWEAIEDIVREHGISFVKGAGMQGWTHLKKGVS.

A helical transmembrane segment spans residues 32–54 (LFYGWKGIAFLSTLTNVLFISGF). Residues 143-165 (YGFGTPLTGPGSEGNEHDPTPWT) are disordered. The HXXHC 1 motif lies at 177–181 (HQLHC). N-linked (GlcNAc...) asparagine glycosylation occurs at N202. The HXXHC 2 signature appears at 209–213 (HVDHC).

The protein belongs to the ustYa family.

It is found in the membrane. The protein operates within mycotoxin biosynthesis. In terms of biological role, ustYa family oxidase; part of the gene cluster that mediates the biosynthesis of the phomopsins, a group of hexapeptide mycotoxins which infects lupins and causes lupinosis disease in livestock. Within the pathway, phomYe catalyzes the desaturation of the Pro moiety into 3,4-dehydroproline (dPro). The pathway starts with the processing of the precursor phomA by several endopeptidases including kexin proteases as well as the cluster-specific S41 family peptidase phomP1 and the oligopeptidase phomG to produce 10 identical copies of the hexapeptide Tyr-Val-Ile-Pro-Ile-Asp. After being excised from the precursor peptide, the core peptides are cyclized and modified post-translationally by enzymes encoded within the gene cluster. The timing and order of proteolysis of the phomA precursor and PTMs are still unknown. Two tyrosinase-like enzymes, phomQ1 and phomQ2, catalyze the chlorination and hydroxylation of Tyr, respectively. PhomYb, is proposed to be involved in the construction of the macrocyclic structure. The other 4 ustYa family proteins may be involved in PTMs that generate the unique structure of phomopsin A. PhomYa is required for the hydroxylation of C-beta of Tyr. PhomYc, phomYd, and phomYe are responsible for the biosynthesis of 2,3-dehydroisoleucine (dIle), 2,3-dehydroaspartic acid (dAsp), and 3,4-dehydroproline (dPro), respectively. While dIle formation by phomYc is indispensable for the installation of dAsp by phomYd, the order of the other PTMs have not been elucidated yet. Most of the biosynthetic enzymes likely have broad substrate specificity, and thus, there might be a metabolic grid from a precursor to phomopsin A. The enzyme(s) responsible for the biosynthesis of 3,4-dehydrovaline (dVal) have also not been identified yet. Finally, phomM acts as an S-adenosylmethionine-dependent alpha-N-methyltransferase that catalyzes two successive N-methylation reactions, converting N-desmethyl-phomopsin A to phomopsin A and phomopsin A further to an N,N-dimethylated congener called phomopsin E. In Diaporthe leptostromiformis (Lupinosis disease fungus), this protein is UstYa family oxidase phomYe.